The following is a 49-amino-acid chain: Osteocalcin (49 aa).

Residues 1–47 (YLDPGLGAPAPYPDPLEPKREVCELNPDCDELADHIGFQEAYRRFYG) enclose the Gla domain. Proline 9 carries the post-translational modification Hydroxyproline. Glutamate 17, glutamate 21, glutamate 24, and aspartate 30 together coordinate Ca(2+). 4-carboxyglutamate is present on residues glutamate 17, glutamate 21, and glutamate 24. A disulfide bond links cysteine 23 and cysteine 29.

This sequence belongs to the osteocalcin/matrix Gla protein family. In terms of processing, gamma-carboxyglutamate residues are formed by vitamin K dependent carboxylation by GGCX. These residues are essential for the binding of calcium. Decarboxylation promotes the hormone activity.

The protein resides in the secreted. The carboxylated form is one of the main organic components of the bone matrix, which constitutes 1-2% of the total bone protein. It acts as a negative regulator of bone formation and is required to limit bone formation without impairing bone resorption or mineralization. The carboxylated form binds strongly to apatite and calcium. Its function is as follows. The uncarboxylated form acts as a hormone secreted by osteoblasts, which regulates different cellular processes, such as energy metabolism, male fertility and brain development. Regulates of energy metabolism by acting as a hormone favoring pancreatic beta-cell proliferation, insulin secretion and sensitivity and energy expenditure. Uncarboxylated osteocalcin hormone also promotes testosterone production in the testes: acts as a ligand for G protein-coupled receptor GPRC6A at the surface of Leydig cells, initiating a signaling response that promotes the expression of enzymes required for testosterone synthesis in a CREB-dependent manner. Also acts as a regulator of brain development: osteocalcin hormone crosses the blood-brain barrier and acts as a ligand for GPR158 on neurons, initiating a signaling response that prevents neuronal apoptosis in the hippocampus, favors the synthesis of all monoamine neurotransmitters and inhibits that of gamma-aminobutyric acid (GABA). Osteocalcin also crosses the placenta during pregnancy and maternal osteocalcin is required for fetal brain development. This Capra hircus (Goat) protein is Osteocalcin (BGLAP).